The chain runs to 279 residues: MSSHSSPADTPSARKPVTLHTLREMHARGEKIAMITAYDASFAALVDTAGVDCILVGDSLGMVLKGQSSTLSVTMEQIGYHTRSTSRGTKAAFLIADMPFGSYQENPVQALRNAGTLMAAGAQMVKLEGGGWTPETVNFLVERGVPVCAHLGLTPQSVHALGGYRIQGKDEAGAATLRRHAKALADAGAAMMVLELMPSRVAREVQADNPGLMTIGIGAGAGTAGQVLVLHDMLGVTRGRLPRFVRNFMDSATSIEDAVRRYVAAVKDGSFPDETLHAY.

Residues aspartate 58 and aspartate 97 each contribute to the Mg(2+) site. 3-methyl-2-oxobutanoate is bound by residues 58–59 (DS), aspartate 97, and lysine 126. A Mg(2+)-binding site is contributed by glutamate 128. Glutamate 195 acts as the Proton acceptor in catalysis.

The protein belongs to the PanB family. Homodecamer; pentamer of dimers. Requires Mg(2+) as cofactor.

The protein localises to the cytoplasm. The catalysed reaction is 3-methyl-2-oxobutanoate + (6R)-5,10-methylene-5,6,7,8-tetrahydrofolate + H2O = 2-dehydropantoate + (6S)-5,6,7,8-tetrahydrofolate. It participates in cofactor biosynthesis; (R)-pantothenate biosynthesis; (R)-pantoate from 3-methyl-2-oxobutanoate: step 1/2. In terms of biological role, catalyzes the reversible reaction in which hydroxymethyl group from 5,10-methylenetetrahydrofolate is transferred onto alpha-ketoisovalerate to form ketopantoate. The protein is 3-methyl-2-oxobutanoate hydroxymethyltransferase 2 of Methylibium petroleiphilum (strain ATCC BAA-1232 / LMG 22953 / PM1).